A 338-amino-acid polypeptide reads, in one-letter code: UPF0324 membrane protein NMA0465 (338 aa).

The next 10 helical transmembrane spans lie at 5-23 (PFYF…ANYL), 33-55 (HISA…YPQF), 62-84 (GVLF…RLTF), 94-116 (AVVT…GIRY), 123-145 (LVYL…AESV), 155-177 (VAIA…FYTW), 222-239 (IRVM…WLLT), 254-273 (IPWF…FDLL), 280-302 (LFVE…TTHA), and 312-334 (PFVL…NYGI).

Belongs to the UPF0324 family.

It localises to the cell membrane. The protein is UPF0324 membrane protein NMA0465 of Neisseria meningitidis serogroup A / serotype 4A (strain DSM 15465 / Z2491).